Reading from the N-terminus, the 494-residue chain is 3-octaprenyl-4-hydroxybenzoate carboxy-lyase (494 aa).

Mn(2+) is bound at residue Asn172. Prenylated FMN-binding positions include 175 to 177 (IYR), 189 to 191 (RWL), and 194 to 195 (RG). Glu238 lines the Mn(2+) pocket. The Proton donor role is filled by Asp294.

Belongs to the UbiD family. In terms of assembly, homohexamer. Requires prenylated FMN as cofactor. Mn(2+) serves as cofactor.

The protein localises to the cell membrane. The enzyme catalyses a 4-hydroxy-3-(all-trans-polyprenyl)benzoate + H(+) = a 2-(all-trans-polyprenyl)phenol + CO2. It functions in the pathway cofactor biosynthesis; ubiquinone biosynthesis. Its function is as follows. Catalyzes the decarboxylation of 3-octaprenyl-4-hydroxy benzoate to 2-octaprenylphenol, an intermediate step in ubiquinone biosynthesis. The protein is 3-octaprenyl-4-hydroxybenzoate carboxy-lyase of Janthinobacterium sp. (strain Marseille) (Minibacterium massiliensis).